We begin with the raw amino-acid sequence, 163 residues long: NADH-quinone oxidoreductase subunit I (163 aa).

4Fe-4S ferredoxin-type domains follow at residues 53 to 83 (LRRY…IEAG) and 94 to 123 (VRYD…EGPN). 8 residues coordinate [4Fe-4S] cluster: Cys63, Cys66, Cys69, Cys73, Cys103, Cys106, Cys109, and Cys113.

The protein belongs to the complex I 23 kDa subunit family. In terms of assembly, NDH-1 is composed of 14 different subunits. Subunits NuoA, H, J, K, L, M, N constitute the membrane sector of the complex. It depends on [4Fe-4S] cluster as a cofactor.

The protein localises to the cell inner membrane. It catalyses the reaction a quinone + NADH + 5 H(+)(in) = a quinol + NAD(+) + 4 H(+)(out). NDH-1 shuttles electrons from NADH, via FMN and iron-sulfur (Fe-S) centers, to quinones in the respiratory chain. The immediate electron acceptor for the enzyme in this species is believed to be ubiquinone. Couples the redox reaction to proton translocation (for every two electrons transferred, four hydrogen ions are translocated across the cytoplasmic membrane), and thus conserves the redox energy in a proton gradient. This Agrobacterium fabrum (strain C58 / ATCC 33970) (Agrobacterium tumefaciens (strain C58)) protein is NADH-quinone oxidoreductase subunit I.